We begin with the raw amino-acid sequence, 239 residues long: Myogenic factor 6 (239 aa).

The tract at residues 27–64 (QHLDMPGVSPLYDGNHSPLSPGPDNVPSETGGESSGDE) is disordered. A bHLH domain is found at 96 to 147 (DRRKAATLRERRRLKKINEAFDALKRKSVANPNQRLPKVEILRSAISYIERL). The disordered stretch occupies residues 155–184 (DEQERGQSGASDTRNDKEQNRPSGGDYCWK).

In terms of assembly, efficient DNA binding requires dimerization with another bHLH protein.

It is found in the nucleus. Involved in muscle differentiation (myogenic factor). Induces fibroblasts to differentiate into myoblasts. Probable sequence specific DNA-binding protein. The sequence is that of Myogenic factor 6 (myf6) from Tetraodon nigroviridis (Spotted green pufferfish).